The primary structure comprises 81 residues: MSEEQLKAFIAKVQADTSLQEQLKAEGADVVAIAKAAGFSITTEDLEKEHRQTLSDDDLEGVAGGFFCVQGTANRFTINVC.

A propeptide spanning residues 1-65 (MSEEQLKAFI…DDDLEGVAGG (65 aa)) is cleaved from the precursor. The segment at residues 68–72 (CVQGT) is a cross-link (beta-methyllanthionine (Cys-Thr)). A cross-link (beta-methyllanthionine (Thr-Cys)) is located at residues 77 to 81 (TINVC).

Cross-links are proved in vitro, when coepressed in E.coli with the ProcM lanthionine synthetase. In terms of processing, the beta-methyllanthionine residues have a DL configuration (with 2S,3S,6R stereochemistry). Post-translationally, maturation of prochlorosin involves the enzymatic conversion of Thr, and Ser into dehydrated AA and the formation of thioether bonds with cysteines. This is followed by membrane translocation and cleavage of the modified precursor.

It localises to the secreted. Its function is as follows. Lanthionine-containing peptide (lantipeptide) with unknown function. Does not show antibiotic activity against Lactococcus lactis 117 and Bacillus subtilis 6633 bacteria. Organisms that produce this peptide live in oligotrophic environments at very dilute concentrations, suggesting this peptide is not secreted to influence other bacteria. This is Lantipeptide prochlorosin 1.1 from Prochlorococcus marinus (strain MIT 9313).